The sequence spans 89 residues: Neuropeptide S (89 aa).

Residues 1–23 form the signal peptide; the sequence is MIGSLKLSFVLALSLSVMHVLWC. The propeptide occupies 24–69; that stretch reads YPVLSSKVPGKPDYFLILLSSCPARLEGSDRLAFLKPILEKTSMKR.

It localises to the secreted. Functionally, may play an important anorexigenic role. Modulates arousal and anxiety as well as increases locomotor activity. Binds to its receptor NPSR1 with nanomolar affinity to increase intracellular calcium concentrations. The chain is Neuropeptide S (Nps) from Mus musculus (Mouse).